A 1295-amino-acid polypeptide reads, in one-letter code: Phosphoribosylformylglycinamidine synthase (1295 aa).

The tract at residues 304–326 (WPGAATGSGGEIRDEGATGRGAK) is disordered. ATP-binding positions include 306 to 317 (GAATGSGGEIRD), 385 to 387 (TGY), and A677. The Mg(2+) site is built by D678, E717, N721, and D884. Residues 995–1012 (LRDNPESADQEHASRQDD) show a composition bias toward basic and acidic residues. The interval 995–1017 (LRDNPESADQEHASRQDDNDPGL) is disordered. A Glutamine amidotransferase type-1 domain is found at 1042–1295 (VAVLREQGVN…LFRNARKQLG (254 aa)). C1135 functions as the Nucleophile in the catalytic mechanism. Active-site residues include H1260 and E1262.

The protein in the N-terminal section; belongs to the FGAMS family. As to quaternary structure, monomer.

It is found in the cytoplasm. The enzyme catalyses N(2)-formyl-N(1)-(5-phospho-beta-D-ribosyl)glycinamide + L-glutamine + ATP + H2O = 2-formamido-N(1)-(5-O-phospho-beta-D-ribosyl)acetamidine + L-glutamate + ADP + phosphate + H(+). It participates in purine metabolism; IMP biosynthesis via de novo pathway; 5-amino-1-(5-phospho-D-ribosyl)imidazole from N(2)-formyl-N(1)-(5-phospho-D-ribosyl)glycinamide: step 1/2. Functionally, phosphoribosylformylglycinamidine synthase involved in the purines biosynthetic pathway. Catalyzes the ATP-dependent conversion of formylglycinamide ribonucleotide (FGAR) and glutamine to yield formylglycinamidine ribonucleotide (FGAM) and glutamate. The chain is Phosphoribosylformylglycinamidine synthase from Sodalis glossinidius (strain morsitans).